The chain runs to 503 residues: Dihydropyrimidinase (503 aa).

Zn(2+) contacts are provided by H66, H68, and K158. Residue K158 is modified to N6-carboxylysine. Y163 provides a ligand contact to substrate. 3 residues coordinate Zn(2+): H191, H247, and D325. N346 lines the substrate pocket.

Belongs to the metallo-dependent hydrolases superfamily. Hydantoinase/dihydropyrimidinase family. As to quaternary structure, homotetramer. Zn(2+) is required as a cofactor. In terms of processing, carboxylation allows a single lysine to coordinate two zinc ions.

The catalysed reaction is 5,6-dihydrouracil + H2O = 3-(carbamoylamino)propanoate + H(+). In terms of biological role, catalyzes the second step of the reductive pyrimidine degradation, the reversible hydrolytic ring opening of dihydropyrimidines. Can catalyze the ring opening of 5,6-dihydrouracil to N-carbamyl-alanine and of 5,6-dihydrothymine to N-carbamyl-amino isobutyrate. The sequence is that of Dihydropyrimidinase (pyd2) from Dictyostelium discoideum (Social amoeba).